The sequence spans 68 residues: UPF0434 protein BTH_I0741 (68 aa).

Belongs to the UPF0434 family.

This chain is UPF0434 protein BTH_I0741, found in Burkholderia thailandensis (strain ATCC 700388 / DSM 13276 / CCUG 48851 / CIP 106301 / E264).